The following is a 149-amino-acid chain: D-aminoacyl-tRNA deacylase (149 aa).

The Gly-cisPro motif, important for rejection of L-amino acids signature appears at 137–138 (GP).

It belongs to the DTD family. Homodimer.

It localises to the cytoplasm. It catalyses the reaction glycyl-tRNA(Ala) + H2O = tRNA(Ala) + glycine + H(+). The enzyme catalyses a D-aminoacyl-tRNA + H2O = a tRNA + a D-alpha-amino acid + H(+). Functionally, an aminoacyl-tRNA editing enzyme that deacylates mischarged D-aminoacyl-tRNAs. Also deacylates mischarged glycyl-tRNA(Ala), protecting cells against glycine mischarging by AlaRS. Acts via tRNA-based rather than protein-based catalysis; rejects L-amino acids rather than detecting D-amino acids in the active site. By recycling D-aminoacyl-tRNA to D-amino acids and free tRNA molecules, this enzyme counteracts the toxicity associated with the formation of D-aminoacyl-tRNA entities in vivo and helps enforce protein L-homochirality. This Clostridium beijerinckii (strain ATCC 51743 / NCIMB 8052) (Clostridium acetobutylicum) protein is D-aminoacyl-tRNA deacylase.